We begin with the raw amino-acid sequence, 121 residues long: Large ribosomal subunit protein uL14c (121 aa).

This sequence belongs to the universal ribosomal protein uL14 family. As to quaternary structure, part of the 50S ribosomal subunit.

The protein resides in the plastid. It is found in the chloroplast. In terms of biological role, binds to 23S rRNA. This chain is Large ribosomal subunit protein uL14c, found in Thalassiosira pseudonana (Marine diatom).